A 188-amino-acid chain; its full sequence is Adrenodoxin, mitochondrial (188 aa).

The transit peptide at 1-64 (MAAAPGARLL…RPLSVSARAR (64 aa)) directs the protein to the mitochondrion. Ser67 carries the post-translational modification Phosphoserine. One can recognise a 2Fe-2S ferredoxin-type domain in the interval 69 to 175 (DKITVHFKNR…NMTVRVPEAV (107 aa)). N6-acetyllysine; alternate is present on Lys70. Position 70 is an N6-succinyllysine; alternate (Lys70). 4 residues coordinate [2Fe-2S] cluster: Cys110, Cys116, Cys119, and Cys156. Position 162 is an N6-succinyllysine (Lys162). Position 181 is a phosphoserine (Ser181).

It belongs to the adrenodoxin/putidaredoxin family. As to quaternary structure, interacts with CYP11A1. Requires [2Fe-2S] cluster as cofactor.

Its subcellular location is the mitochondrion matrix. In terms of biological role, essential for the synthesis of various steroid hormones, participates in the reduction of mitochondrial cytochrome P450 for steroidogenesis. Transfers electrons from adrenodoxin reductase to CYP11A1, a cytochrome P450 that catalyzes cholesterol side-chain cleavage. Does not form a ternary complex with adrenodoxin reductase and CYP11A1 but shuttles between the two enzymes to transfer electrons. This is Adrenodoxin, mitochondrial (Fdx1) from Mus musculus (Mouse).